Reading from the N-terminus, the 61-residue chain is Defensin BmKDfsin1 (61 aa).

The first 25 residues, methionine 1–alanine 25, serve as a signal peptide directing secretion. Cystine bridges form between cysteine 29–cysteine 50, cysteine 36–cysteine 58, and cysteine 40–cysteine 60.

The protein belongs to the invertebrate defensin family. Type 2 subfamily. As to expression, highly expressed in non-venom gland (hemolymph) and moderately expressed in venom gland.

It is found in the secreted. Antibacterial peptide active against Gram-positive bacteria, but not on Gram-negative bacteria. Also has weak blocking activity on Kv1.1/KCNA1, Kv1.2/KCNA2, Kv1.3/KCNA3, KCa3.1/KCNN4/IK, KCa2.3/KCNN3/SK3 and Kv11.1/KCNH2/ERG1 channels (tested at 1 uM). It inhibits potassium channel current by interacting with the pore region. The sequence is that of Defensin BmKDfsin1 from Olivierus martensii (Manchurian scorpion).